The primary structure comprises 259 residues: MKKQDRRPEILVCNDDGIEGEGIHVLAASMKKLGNVTVVAPAEPHSGMSHAMTLGVPLRIREFRRNNRFFGHTVSGTPVDCIKVALSHIMKVKPDLIVSGINYGSNTAMSTLYSGTVAAALEGAIQGVTSLAFSLTTYEHADFTYAGKFARKLARKVLQEGLPEDTILSVNIPNVPEADIQGVRITGQGRSRWSEDAIERNDMYGNPYYWLNGTLMLLDEGMESDEFAVRRNFVTLTPLSCDLTRHGFRSTLEQWKLKK.

Residues Asp15, Asp16, Ser46, and Asn102 each contribute to the a divalent metal cation site.

This sequence belongs to the SurE nucleotidase family. A divalent metal cation is required as a cofactor.

The protein localises to the cytoplasm. The enzyme catalyses a ribonucleoside 5'-phosphate + H2O = a ribonucleoside + phosphate. In terms of biological role, nucleotidase that shows phosphatase activity on nucleoside 5'-monophosphates. The chain is 5'-nucleotidase SurE from Chlorobium luteolum (strain DSM 273 / BCRC 81028 / 2530) (Pelodictyon luteolum).